The chain runs to 505 residues: ATP synthase subunit alpha (505 aa).

The segment at 118-138 (VDGLGPINTTNTRPIESPAPG) is disordered. 172 to 179 (GDRQTGKT) contributes to the ATP binding site.

Belongs to the ATPase alpha/beta chains family. F-type ATPases have 2 components, CF(1) - the catalytic core - and CF(0) - the membrane proton channel. CF(1) has five subunits: alpha(3), beta(3), gamma(1), delta(1), epsilon(1). CF(0) has three main subunits: a(1), b(2) and c(9-12). The alpha and beta chains form an alternating ring which encloses part of the gamma chain. CF(1) is attached to CF(0) by a central stalk formed by the gamma and epsilon chains, while a peripheral stalk is formed by the delta and b chains.

Its subcellular location is the cell membrane. The catalysed reaction is ATP + H2O + 4 H(+)(in) = ADP + phosphate + 5 H(+)(out). Functionally, produces ATP from ADP in the presence of a proton gradient across the membrane. The alpha chain is a regulatory subunit. This Bacillus cereus (strain ATCC 14579 / DSM 31 / CCUG 7414 / JCM 2152 / NBRC 15305 / NCIMB 9373 / NCTC 2599 / NRRL B-3711) protein is ATP synthase subunit alpha.